The sequence spans 498 residues: Polygalacturonan/rhamnogalacturonan-binding protein YtcQ (498 aa).

The N-terminal stretch at 1 to 22 is a signal peptide; that stretch reads MGNKWRVLLIVLVLALGGVLAG. Cys23 is lipidated: N-palmitoyl cysteine. The S-diacylglycerol cysteine moiety is linked to residue Cys23.

The protein belongs to the bacterial solute-binding protein 1 family. As to quaternary structure, the complex is probably composed of two ATP-binding proteins (MsmX), two transmembrane proteins (YtcP and YteP) and a solute-binding protein (YtcQ).

The protein localises to the cell membrane. Functionally, involved in pectin degradation. Part of the ABC transporter complex YtcQP-YteP involved in the uptake of polygalacturonan and rhamnogalacturonan type I. The protein is Polygalacturonan/rhamnogalacturonan-binding protein YtcQ (ytcQ) of Bacillus subtilis (strain 168).